Consider the following 302-residue polypeptide: Probable 2-(5''-triphosphoribosyl)-3'-dephosphocoenzyme-A synthase (302 aa).

It belongs to the CitG/MdcB family.

It carries out the reaction 3'-dephospho-CoA + ATP = 2'-(5''-triphospho-alpha-D-ribosyl)-3'-dephospho-CoA + adenine. The sequence is that of Probable 2-(5''-triphosphoribosyl)-3'-dephosphocoenzyme-A synthase from Citrobacter koseri (strain ATCC BAA-895 / CDC 4225-83 / SGSC4696).